A 210-amino-acid chain; its full sequence is Outer-membrane lipoprotein LolB (210 aa).

An N-terminal signal peptide occupies residues 1–18 (MKKFTKILSLSTLLFLAG). Cys-19 carries the N-palmitoyl cysteine lipid modification. Residue Cys-19 is the site of S-diacylglycerol cysteine attachment.

The protein belongs to the LolB family. Monomer.

Its subcellular location is the cell outer membrane. Its function is as follows. Plays a critical role in the incorporation of lipoproteins in the outer membrane after they are released by the LolA protein. In Actinobacillus pleuropneumoniae serotype 7 (strain AP76), this protein is Outer-membrane lipoprotein LolB.